We begin with the raw amino-acid sequence, 853 residues long: Eukaryotic translation initiation factor 3 subunit C (853 aa).

The segment at 1 to 78 is disordered; it reads MSRFFAASDS…EDEDQNKVLK (78 aa). A compositionally biased stretch (acidic residues) spans 11–46; it reads SSEESSEEELYSDNEASAQEDSDKDSDDDDSDDDDS. The 175-residue stretch at 599–773 folds into the PCI domain; the sequence is FHMHINLELL…SAIIFRKGVE (175 aa). Positions 798–853 are disordered; the sequence is TLEQRTQGTANAFERQGGRGGRGGGRGRGGGRGGGVPRGGRNQQFTGGALGRAIQA. Over residues 815-835 the composition is skewed to gly residues; it reads GRGGRGGGRGRGGGRGGGVPR.

Belongs to the eIF-3 subunit C family. Component of the eukaryotic translation initiation factor 3 (eIF-3) complex.

The protein localises to the cytoplasm. Functionally, component of the eukaryotic translation initiation factor 3 (eIF-3) complex, which is involved in protein synthesis of a specialized repertoire of mRNAs and, together with other initiation factors, stimulates binding of mRNA and methionyl-tRNAi to the 40S ribosome. The eIF-3 complex specifically targets and initiates translation of a subset of mRNAs involved in cell proliferation. The chain is Eukaryotic translation initiation factor 3 subunit C from Phaeosphaeria nodorum (strain SN15 / ATCC MYA-4574 / FGSC 10173) (Glume blotch fungus).